The following is a 342-amino-acid chain: HTH-type transcriptional regulator GbpR (342 aa).

An HTH lysR-type domain is found at 16-73; it reads LKLRHLQLFVALDEHRNLHRAAASLTMSQPAASKLLGDLEESLGVTLFERHGRGVEPN. The segment at residues 33-52 is a DNA-binding region (H-T-H motif); the sequence is LHRAAASLTMSQPAASKLLG.

The protein belongs to the LysR transcriptional regulatory family.

Its function is as follows. Does not seem to be required for sbpA expression. In Azospirillum brasilense, this protein is HTH-type transcriptional regulator GbpR (gbpR).